The chain runs to 284 residues: Bifunctional protein FolD (284 aa).

NADP(+) is bound by residues 163-165 (GRS) and Ser188.

The protein belongs to the tetrahydrofolate dehydrogenase/cyclohydrolase family. In terms of assembly, homodimer.

It catalyses the reaction (6R)-5,10-methylene-5,6,7,8-tetrahydrofolate + NADP(+) = (6R)-5,10-methenyltetrahydrofolate + NADPH. The enzyme catalyses (6R)-5,10-methenyltetrahydrofolate + H2O = (6R)-10-formyltetrahydrofolate + H(+). It participates in one-carbon metabolism; tetrahydrofolate interconversion. Catalyzes the oxidation of 5,10-methylenetetrahydrofolate to 5,10-methenyltetrahydrofolate and then the hydrolysis of 5,10-methenyltetrahydrofolate to 10-formyltetrahydrofolate. The chain is Bifunctional protein FolD from Lactococcus lactis subsp. lactis (strain IL1403) (Streptococcus lactis).